The sequence spans 318 residues: Ferredoxin--NADP reductase (318 aa).

FAD contacts are provided by Asp33, Gln41, Tyr46, Val84, Phe115, Asp276, and Thr316.

It belongs to the ferredoxin--NADP reductase type 2 family. As to quaternary structure, homodimer. Requires FAD as cofactor.

The catalysed reaction is 2 reduced [2Fe-2S]-[ferredoxin] + NADP(+) + H(+) = 2 oxidized [2Fe-2S]-[ferredoxin] + NADPH. The chain is Ferredoxin--NADP reductase from Lactobacillus johnsonii (strain CNCM I-12250 / La1 / NCC 533).